Consider the following 346-residue polypeptide: Anthranilate phosphoribosyltransferase (346 aa).

5-phospho-alpha-D-ribose 1-diphosphate is bound by residues glycine 81, 84–85 (GD), 91–94 (NVST), 109–117 (KHGGRSVSS), and serine 121. An anthranilate-binding site is contributed by glycine 81. Residue serine 93 coordinates Mg(2+). Residue arginine 167 participates in anthranilate binding. Mg(2+) is bound by residues aspartate 226 and glutamate 227.

The protein belongs to the anthranilate phosphoribosyltransferase family. Homodimer. Mg(2+) serves as cofactor.

It catalyses the reaction N-(5-phospho-beta-D-ribosyl)anthranilate + diphosphate = 5-phospho-alpha-D-ribose 1-diphosphate + anthranilate. It functions in the pathway amino-acid biosynthesis; L-tryptophan biosynthesis; L-tryptophan from chorismate: step 2/5. Functionally, catalyzes the transfer of the phosphoribosyl group of 5-phosphorylribose-1-pyrophosphate (PRPP) to anthranilate to yield N-(5'-phosphoribosyl)-anthranilate (PRA). The protein is Anthranilate phosphoribosyltransferase of Marinomonas sp. (strain MWYL1).